Here is a 160-residue protein sequence, read N- to C-terminus: Ureidoglycolate lyase (160 aa).

Belongs to the ureidoglycolate lyase family. In terms of assembly, homodimer. Requires Ni(2+) as cofactor.

The catalysed reaction is (S)-ureidoglycolate = urea + glyoxylate. The protein operates within nitrogen metabolism; (S)-allantoin degradation. In terms of biological role, catalyzes the catabolism of the allantoin degradation intermediate (S)-ureidoglycolate, generating urea and glyoxylate. Involved in the utilization of allantoin as nitrogen source. This Salmonella enteritidis protein is Ureidoglycolate lyase.